The sequence spans 549 residues: MTAKNIRRAYHVIRTALHYGLDDLIPSKLTPWYFKLFRYSFFWLRNQHKDKVGGERLKLAMQELGPVYIKFGQMLSTRRDLLSDEWAEELAMLQDRVPPFDSAIARASIETELNAPIESYFNDFDDIPLASASISQVHTATLKSNGAAVVLKILRPDVEQKVHADLLLMSQAADFLETLLGTNNRLRPAEVVEDYRTTIEGELNLKLEALNAIKLRNNFIDSNALYIPYMYEELCFTRLIVMERIDGIPVSDKVALEAQGTNLKLLAERGVELFFTQVFRDNFFHADMHPGNIFVSREHPNDPLYIGLDCGIMGTLTEEDKRYLAENFLAFFNRDYRRIAQLYIESGWVSPDTDVAAFEQAVKVVCEPMFNKPLDEISFGHVLLELFRTARRFDMVVQPQLVLLEKTLLYIEGLGRQLYPQLDLWQTAKPFLEQWMAEQVGPKVMAAKVKQKLPYWAEHLPELPELIYDNLKMGRNLSKNQNNLLDRYLKHQQKAHKSNYLLITSAILVICGTILINQDATLWPSYGSIGTGIALWVLGWRSRPKNRKI.

Residues 123–501 (DFDDIPLASA…QQKAHKSNYL (379 aa)) enclose the Protein kinase domain. Residues 129-137 (LASASISQV) and Lys152 contribute to the ATP site. The active-site Proton acceptor is the Asp287. 2 helical membrane-spanning segments follow: residues 498 to 518 (SNYL…LINQ) and 520 to 540 (ATLW…VLGW).

It belongs to the ABC1 family. UbiB subfamily.

The protein localises to the cell inner membrane. It participates in cofactor biosynthesis; ubiquinone biosynthesis [regulation]. Its function is as follows. Is probably a protein kinase regulator of UbiI activity which is involved in aerobic coenzyme Q (ubiquinone) biosynthesis. The protein is Probable protein kinase UbiB of Shewanella halifaxensis (strain HAW-EB4).